We begin with the raw amino-acid sequence, 171 residues long: Crossover junction endodeoxyribonuclease RuvC (171 aa).

Residues D12, E72, and D144 contribute to the active site. Mg(2+) contacts are provided by D12, E72, and D144.

Belongs to the RuvC family. In terms of assembly, homodimer which binds Holliday junction (HJ) DNA. The HJ becomes 2-fold symmetrical on binding to RuvC with unstacked arms; it has a different conformation from HJ DNA in complex with RuvA. In the full resolvosome a probable DNA-RuvA(4)-RuvB(12)-RuvC(2) complex forms which resolves the HJ. Mg(2+) is required as a cofactor.

The protein localises to the cytoplasm. The enzyme catalyses Endonucleolytic cleavage at a junction such as a reciprocal single-stranded crossover between two homologous DNA duplexes (Holliday junction).. In terms of biological role, the RuvA-RuvB-RuvC complex processes Holliday junction (HJ) DNA during genetic recombination and DNA repair. Endonuclease that resolves HJ intermediates. Cleaves cruciform DNA by making single-stranded nicks across the HJ at symmetrical positions within the homologous arms, yielding a 5'-phosphate and a 3'-hydroxyl group; requires a central core of homology in the junction. The consensus cleavage sequence is 5'-(A/T)TT(C/G)-3'. Cleavage occurs on the 3'-side of the TT dinucleotide at the point of strand exchange. HJ branch migration catalyzed by RuvA-RuvB allows RuvC to scan DNA until it finds its consensus sequence, where it cleaves and resolves the cruciform DNA. In Afipia carboxidovorans (strain ATCC 49405 / DSM 1227 / KCTC 32145 / OM5) (Oligotropha carboxidovorans), this protein is Crossover junction endodeoxyribonuclease RuvC.